Here is a 153-residue protein sequence, read N- to C-terminus: Putative nuclear shuttle protein (153 aa).

Belongs to the nanoviridae nuclear shuttle protein family.

It is found in the host nucleus. The protein localises to the host cytoplasm. Its function is as follows. Putative nuclear shuttle protein. In Trifolium subterraneum (Subterranean clover), this protein is Putative nuclear shuttle protein (DNA-N).